A 1055-amino-acid chain; its full sequence is Ubiquitin carboxyl-terminal hydrolase 25 (1055 aa).

The UBA-like domain maps to 14 to 57; sequence QKHQQTFLNQLREITGINDTQILQQALKDSNGNLELAVAFLTAK. The segment at 77 to 102 is SUMO interaction domain (SIM); the sequence is NDRYISVGSQADTNVIDLTGDDKDDL. Serine 85 is subject to Phosphoserine. The Required for SUMO paralog-specific binding motif lies at 89–95; it reads TNVIDLT. 2 UIM domains span residues 97 to 116 and 123 to 140; these read DDKD…SNRA and TDEE…IAEN. Lysine 99 participates in a covalent cross-link: Glycyl lysine isopeptide (Lys-Gly) (interchain with G-Cter in SUMO); alternate. Lysine 99 is covalently cross-linked (Glycyl lysine isopeptide (Lys-Gly) (interchain with G-Cter in ubiquitin); alternate). In terms of domain architecture, USP spans 169 to 657; that stretch reads VGLKNVGNTC…SAYCLMYIND (489 aa). Cysteine 178 is an active-site residue. The disordered stretch occupies residues 464–507; that stretch reads VCTSPVDDIDASSPPSGSIPSQTLPSTTEQQGALSSELPSTSPS. Positions 476 to 496 are enriched in polar residues; the sequence is SPPSGSIPSQTLPSTTEQQGA. Over residues 497–507 the composition is skewed to low complexity; that stretch reads LSSELPSTSPS. Positions 541–578 form a coiled coil; the sequence is TEEELSVLESCLHRWRTEIENDTRDLQESISRIHRTIE. Catalysis depends on residues histidine 599 and histidine 607. A coiled-coil region spans residues 684–717; that stretch reads DLRDFVEEDNQRFEKELEEWDAQLAQKALQEKLL. The segment at 727 to 749 is disordered; it reads TSVTTAQAAGDPEYLEQPSRSDF. Tyrosine 740 is modified (phosphotyrosine).

It belongs to the peptidase C19 family. As to quaternary structure, homotetramer, inhibited form. Homodimer, active form. Interacts with ACTA1 (via its C-terminus); the interaction occurs for all isoforms but is strongest for isoform USP25m in muscle differentiating cells. Interacts (isoform USP25m only) with MYBPC1; the interaction prevents proteasomal degradation of MYBPC1. Interacts (isoform USP25m only) with FLNC (via filament repeats 17-18, 20-21 and 24). Interacts with GAPDH. Interacts with SUMO3; the interaction sumoylates efficiently USP25. Interacts with SUMO2; the interaction sumoylates efficiently USP25. Interacts with SUMO1; the interaction only weakly sumoylates USP25. Interacts with SYK; phosphorylates USP25 and regulates USP25 intracellular levels. In terms of processing, acetylated. Post-translationally, sumoylation impairs binding to and hydrolysis of ubiquitin chains. Sumoylated preferentially with SUMO2 or SUMO3. Desumoylated by SENP1. Polyubiquitinated by SMURF1 by promoting the 'Lys-48'-linkage leading to proteasomal degradation. Preferentially monoubiquitinated but can also be polyubiquitinated. Autodeubiquitinated. Ubiquitination activates the enzymatic activity either by preventing sumoylation or by allowing novel interactions. In terms of processing, phosphorylation in the C-terminal by SYK regulates USP25 cellular levels. Isoform USP25a is found in most adult and fetal tissues; expression is moderately high in testis, pancreas, kidney, skeletal muscle, liver, lung, placenta, heart, but very low in peripheral blood, colon, small intestine, ovary, prostate, thymus and spleen. Expressed in the brain, with high levels in the cerebral cortex. Isoform USP25b is found in all tissues except heart and skeletal muscle. Isoform USP25m is heart and skeletal muscle specific.

Its subcellular location is the cytoplasm. The protein resides in the nucleus. It catalyses the reaction Thiol-dependent hydrolysis of ester, thioester, amide, peptide and isopeptide bonds formed by the C-terminal Gly of ubiquitin (a 76-residue protein attached to proteins as an intracellular targeting signal).. Deubiquitinating enzyme that hydrolyzes ubiquitin moieties conjugated to substrates and thus, functions in various biological processes including inflammation and immune response. Modulates the Wnt/beta-catenin pathway by deubiquitinating and stabilizing tankyrases TNKS1 and TNKS2. Regulates KEAP1-NRF2 axis in the defense against oxidative assaults by deubiquitinating KEAP1 and protecting it from degradation leading to degradation of the NRF2 transcription factor that is responsible for mounting an anti-oxidation gene expression program. Positively regulates RNA virus-induced innate signaling by interacting with and deubiquitinating ERLIN1 and ERLIN2. In turn, restricts virus production by regulating cholesterol biosynthetic flux. Acts as a negative regulator of interleukin-17-mediated signaling and inflammation through the removal of 'Lys-63'-linked ubiquitination of TRAF5 and TRAF6. Prevents the ubiquitination and degradation of TRAF3 to reduce the phosphorylation levels of JNK and P38, the secretion of IL-1B and to induce endotoxin tolerance. In terms of biological role, the muscle-specific isoform (USP25m) may have a role in the regulation of muscular differentiation and function. The sequence is that of Ubiquitin carboxyl-terminal hydrolase 25 (USP25) from Homo sapiens (Human).